The chain runs to 108 residues: MNLLELSCTPQHGQSPLADNTVKQLLSTLPDWEIVGIELRKTYRFANYHETMAFVNALAWIANQEDHHPDMSVHYNRAVVNFSTHDAGGLTLNDFICAAKTEALFRRP.

Belongs to the pterin-4-alpha-carbinolamine dehydratase family.

The enzyme catalyses (4aS,6R)-4a-hydroxy-L-erythro-5,6,7,8-tetrahydrobiopterin = (6R)-L-erythro-6,7-dihydrobiopterin + H2O. This is Putative pterin-4-alpha-carbinolamine dehydratase from Chromobacterium violaceum (strain ATCC 12472 / DSM 30191 / JCM 1249 / CCUG 213 / NBRC 12614 / NCIMB 9131 / NCTC 9757 / MK).